Consider the following 91-residue polypeptide: Large ribosomal subunit protein eL37B (91 aa).

Cysteine 19, cysteine 22, cysteine 34, and cysteine 37 together coordinate Zn(2+). The C4-type zinc-finger motif lies at cysteine 19–cysteine 37.

The protein belongs to the eukaryotic ribosomal protein eL37 family. As to quaternary structure, component of the large ribosomal subunit (LSU). Mature yeast ribosomes consist of a small (40S) and a large (60S) subunit. The 40S small subunit contains 1 molecule of ribosomal RNA (18S rRNA) and at least 33 different proteins. The large 60S subunit contains 3 rRNA molecules (25S, 5.8S and 5S rRNA) and at least 46 different proteins. It depends on Zn(2+) as a cofactor.

It is found in the cytoplasm. In terms of biological role, component of the ribosome, a large ribonucleoprotein complex responsible for the synthesis of proteins in the cell. The small ribosomal subunit (SSU) binds messenger RNAs (mRNAs) and translates the encoded message by selecting cognate aminoacyl-transfer RNA (tRNA) molecules. The large subunit (LSU) contains the ribosomal catalytic site termed the peptidyl transferase center (PTC), which catalyzes the formation of peptide bonds, thereby polymerizing the amino acids delivered by tRNAs into a polypeptide chain. The nascent polypeptides leave the ribosome through a tunnel in the LSU and interact with protein factors that function in enzymatic processing, targeting, and the membrane insertion of nascent chains at the exit of the ribosomal tunnel. The sequence is that of Large ribosomal subunit protein eL37B (rpl3702) from Schizosaccharomyces pombe (strain 972 / ATCC 24843) (Fission yeast).